Consider the following 1169-residue polypeptide: Protein MBD-R2 (1169 aa).

The THAP-type zinc-finger motif lies at C5–H59. 3 disordered regions span residues R99–D122, S140–N211, and A347–Q394. The segment covering E107–D122 has biased composition (polar residues). The span at S140–N160 shows a compositional bias: basic and acidic residues. Low complexity predominate over residues P190–L202. Positions K353–S363 are enriched in polar residues. The region spanning K445 to R514 is the MBD domain. A disordered region spans residues G527–K565. The span at S542 to S559 shows a compositional bias: polar residues. A C2H2-type zinc finger spans residues Y640 to H665. The interval Q714–A890 is disordered. The segment covering S726–T742 has biased composition (low complexity). Residues P774–R784 show a composition bias toward polar residues. A compositionally biased stretch (basic residues) spans S798–R810. 2 stretches are compositionally biased toward polar residues: residues A853–D862 and S869–I881.

In terms of assembly, component of the non-specific lethal (NLS) histone acetyltransferase complex at least composed of mof, nls1, dgt1/NSL2, Rcd1/NSL3, Rcd5/MCRS2, MBD-R2 and wds.

It localises to the nucleus. It is found in the chromosome. Component of the non-specific lethal (NLS) complex, a multiprotein complex that promotes expression of housekeeping genes on X chromosome and autosomes. In Drosophila melanogaster (Fruit fly), this protein is Protein MBD-R2.